Here is a 977-residue protein sequence, read N- to C-terminus: Short transient receptor potential channel 4 (977 aa).

Residues 1 to 324 (MAQFYYKRNV…YDEFPGWRRR (324 aa)) lie on the Cytoplasmic side of the membrane. 4 ANK repeats span residues 29–60 (LSPS…IYFK), 71–93 (RTAL…LSFN), 96–118 (VGDA…LLNH), and 141–165 (PDIT…VQKG). Zn(2+) contacts are provided by H172, C176, C178, and C181. Residues 223–260 (LSWELQELSKVENEFKSEYEELSRQCKQFAKDLLDQTR) are a coiled coil. The segment at residues 325-359 (HWAVKMVTCFIIGLLFPVFSVCYLIAPKSPLGLFI) is an intramembrane region (discontinuously helical). The Cytoplasmic portion of the chain corresponds to 360–362 (RKP). The chain crosses the membrane as a helical span at residues 363–383 (FIKFICHTASYLTFLFLLLLA). The Extracellular portion of the chain corresponds to 384-403 (SQHIDRSDLNRQGPPPTIVE). A helical transmembrane segment spans residues 404–418 (WMILPWVLGFIWGEI). Ca(2+) is bound by residues E417, Q420, N435, and D438. Topologically, residues 419–432 (KQMWDGGLQDYIHD) are cytoplasmic. Residues 433–453 (WWNLMDFVMNSLYLATISLKI) form a helical membrane-spanning segment. Residues 454 to 475 (VAFVKYSALNPRESWDMWHPTL) are Extracellular-facing. Residues 476–498 (VAEALFAIANIFSSLRLISLFTA) traverse the membrane as a helical segment. At 499 to 511 (NSHLGPLQISLGR) the chain is on the cytoplasmic side. A helical transmembrane segment spans residues 512–534 (MLLDILKFLFIYCLVLLAFANGL). At 535–599 (NQLYFYYEET…HEFTDFVGAT (65 aa)) the chain is on the extracellular side. A disulfide bridge links C549 with C554. A helical transmembrane segment spans residues 600 to 620 (MFGTYNVISLVVLLNMLIAMM). Residues 615-977 (MLIAMMNNSY…AHEDYVTTRL (363 aa)) are interaction with ITPR1, ITPR2 and ITPR3. The Cytoplasmic segment spans residues 621–977 (NNSYQLIADH…AHEDYVTTRL (357 aa)). The disordered stretch occupies residues 767–790 (AASSASSADSDEKSHSEGNGKDKR). Over residues 776-787 (SDEKSHSEGNGK) the composition is skewed to basic and acidic residues. Y959 and Y972 each carry phosphotyrosine; by FYN. Positions 975–977 (TRL) are PDZ-binding domain.

It belongs to the transient receptor (TC 1.A.4) family. STrpC subfamily. TRPC4 sub-subfamily. Homotetramer. Heterotetramer with TRPC1 and/or TRPC5. Forms a heteromeric ion channel with TRPC1, with a 1:3 TRPC1:TRPC4 stoichiometry. Interacts with TRPC4AP. Isoform alpha but not isoform beta interacts with ITPR1, ITPR2 and ITPR3. Interacts with NHERF1. Interacts with MX1 and RNF24. Interacts (via CIRB domain) with SESTD1 (via the spectrin 1 repeat) and SPTBN5 (via C-terminus). Interacts with CDH5 and CTNNB1. Interacts (via protein 4.1-binding domain) with EPB41L2. Interacts with PLSCR1.

The protein localises to the cell membrane. The catalysed reaction is Ca(2+)(in) = Ca(2+)(out). It catalyses the reaction Na(+)(in) = Na(+)(out). The enzyme catalyses Li(+)(in) = Li(+)(out). It carries out the reaction Cs(+)(in) = Cs(+)(out). With respect to regulation, may be operated by a phosphatidylinositol second messenger system activated by receptor tyrosine kinases or G-protein coupled receptors. May be activated by intracellular calcium store depletion. Functionally, forms a receptor-activated non-selective calcium permeant cation channel. Acts as a cell-cell contact-dependent endothelial calcium entry channel. Forms a homomeric ion channel or a heteromeric ion channel with TRPC1; the heteromeric ion channel has reduced calcium permeability compared to the homomeric channel. Also permeable to monovalent ions including sodium, lithium and cesium ions. Forms a non-selective a receptor-activated calcium permeant cation channel. Probably is operated by a phosphatidylinositol second messenger system activated by receptor tyrosine kinases or G-protein coupled receptors. This chain is Short transient receptor potential channel 4 (Trpc4), found in Rattus norvegicus (Rat).